Consider the following 94-residue polypeptide: Putative pterin-4-alpha-carbinolamine dehydratase (94 aa).

It belongs to the pterin-4-alpha-carbinolamine dehydratase family.

It catalyses the reaction (4aS,6R)-4a-hydroxy-L-erythro-5,6,7,8-tetrahydrobiopterin = (6R)-L-erythro-6,7-dihydrobiopterin + H2O. This chain is Putative pterin-4-alpha-carbinolamine dehydratase, found in Chloroflexus aggregans (strain MD-66 / DSM 9485).